Here is a 150-residue protein sequence, read N- to C-terminus: uncharacterized protein (150 aa).

The helical transmembrane segment at 19–39 (SLGMCVILIDGLIVLTAAFVF) threads the bilayer.

This sequence to B.subtilis YpjC, YqfU and YitT.

The protein localises to the cell membrane. This is an uncharacterized protein from Bacillus sp. (strain PS3).